We begin with the raw amino-acid sequence, 732 residues long: Conidiogenone synthase (732 aa).

The interval 1-311 is terpene cyclase; that stretch reads MADKITDEYA…SLCVPRYCKV (311 aa). Asp97 is a binding site for Mg(2+). Substrate-binding positions include Asp97, 169–172, Asn213, 217–221, and 307–308; these read RIVD, SWDKE, and RY. The DDXXD 1 motif lies at 97-101; that stretch reads DALNQ. The NSE/DTE motif lies at 213–221; it reads NDLFSWDKE. The prenyltransferase stretch occupies residues 312-732; it reads DRNPYKDHLE…LRAMEETLQK (421 aa). The interval 348–370 is disordered; that stretch reads KQSELKDPSSSTYKSHFSPLEPN. Residues Lys402, Arg405, and His434 each coordinate isopentenyl diphosphate. Positions 441 and 445 each coordinate Mg(2+). The DDXXD 2 motif lies at 441 to 445; it reads DDIQD. Arg450 lines the dimethylallyl diphosphate pocket. Arg451 provides a ligand contact to isopentenyl diphosphate. Lys529, Thr530, Gln565, Asn572, Lys582, and Lys592 together coordinate dimethylallyl diphosphate.

It in the N-terminal section; belongs to the terpene synthase family. The protein in the C-terminal section; belongs to the FPP/GGPP synthase family. As to quaternary structure, hexamer. Requires Mg(2+) as cofactor.

The enzyme catalyses isopentenyl diphosphate + (2E,6E)-farnesyl diphosphate = (2E,6E,10E)-geranylgeranyl diphosphate + diphosphate. It functions in the pathway secondary metabolite biosynthesis; terpenoid biosynthesis. Functionally, bifunctional terpene synthase; part of the gene cluster that mediates the biosynthesis of conidiogenone, a diterpene known to induce the conidiation. The bifunctional terpene synthase PchDS converts isopentenyl diphosphate (IPP) and dimethylallyl diphosphate (DMAPP) into deoxyconidiogenol. The C-terminal prenyltransferase (PT) domain of PchDS catalyzes formation of GGPP, whereas the N-terminal terpene cyclase (TC) domain catalyzes the cyclization of GGPP into deoxyconidiogenol. The cytochrome P450 monooxygenase PchP450 then catalyzes two rounds of oxidation to furnish conidiogenone. This is Conidiogenone synthase from Penicillium rubens (strain ATCC 28089 / DSM 1075 / NRRL 1951 / Wisconsin 54-1255) (Penicillium chrysogenum).